The sequence spans 417 residues: NADH-quinone oxidoreductase subunit D (417 aa).

Belongs to the complex I 49 kDa subunit family. NDH-1 is composed of 14 different subunits. Subunits NuoB, C, D, E, F, and G constitute the peripheral sector of the complex.

The protein resides in the cell inner membrane. The enzyme catalyses a quinone + NADH + 5 H(+)(in) = a quinol + NAD(+) + 4 H(+)(out). Its function is as follows. NDH-1 shuttles electrons from NADH, via FMN and iron-sulfur (Fe-S) centers, to quinones in the respiratory chain. The immediate electron acceptor for the enzyme in this species is believed to be ubiquinone. Couples the redox reaction to proton translocation (for every two electrons transferred, four hydrogen ions are translocated across the cytoplasmic membrane), and thus conserves the redox energy in a proton gradient. The protein is NADH-quinone oxidoreductase subunit D of Paraburkholderia phymatum (strain DSM 17167 / CIP 108236 / LMG 21445 / STM815) (Burkholderia phymatum).